The sequence spans 298 residues: 4-hydroxy-tetrahydrodipicolinate synthase (298 aa).

Threonine 48 contacts pyruvate. Tyrosine 137 (proton donor/acceptor) is an active-site residue. The Schiff-base intermediate with substrate role is filled by lysine 166. Isoleucine 207 lines the pyruvate pocket.

The protein belongs to the DapA family. Homotetramer; dimer of dimers.

It is found in the cytoplasm. The enzyme catalyses L-aspartate 4-semialdehyde + pyruvate = (2S,4S)-4-hydroxy-2,3,4,5-tetrahydrodipicolinate + H2O + H(+). The protein operates within amino-acid biosynthesis; L-lysine biosynthesis via DAP pathway; (S)-tetrahydrodipicolinate from L-aspartate: step 3/4. Catalyzes the condensation of (S)-aspartate-beta-semialdehyde [(S)-ASA] and pyruvate to 4-hydroxy-tetrahydrodipicolinate (HTPA). The chain is 4-hydroxy-tetrahydrodipicolinate synthase from Campylobacter jejuni subsp. jejuni serotype O:2 (strain ATCC 700819 / NCTC 11168).